The following is a 226-amino-acid chain: uncharacterized protein (226 aa).

This is an uncharacterized protein from Bacillus subtilis (strain 168).